Reading from the N-terminus, the 162-residue chain is Translocator protein 2 (162 aa).

5 consecutive transmembrane segments (helical) span residues 3 to 23 (LQGP…CMLI), 44 to 64 (VILL…YLVW), 79 to 99 (LGLY…FLAA), 103 to 123 (GLAL…VFIW), and 129 to 149 (LAAL…AITY).

This sequence belongs to the TspO/BZRP family. As to quaternary structure, homotetramer. May also form homodimer. In terms of tissue distribution, expressed in liver, bone marrow and spleen. In spleen, detected in red pulp but not in white pulp.

It is found in the endoplasmic reticulum membrane. It localises to the cell membrane. Its function is as follows. Cholesterol-binding protein involved in the redistribution of cholesterol from lipid droplets to the endoplasmic reticulum. Required to meet cholesterol demands during erythropoietic differentiation. May play a role in transport processes at the plasma membrane of erythrocytes, including regulating VDAC-mediated ATP export, and import of the heme precursors protoporphyrin IX and 5-aminolevulinic acid. The protein is Translocator protein 2 (Tspo2) of Mus musculus (Mouse).